A 28-amino-acid polypeptide reads, in one-letter code: Ranatuerin-2BYb (28 aa).

A disulfide bond links cysteine 23 and cysteine 28.

Expressed by the skin glands.

The protein localises to the secreted. Functionally, antibacterial activity against Gram-negative bacterium E.coli. Very weak hemolysis activity. The protein is Ranatuerin-2BYb of Rana boylii (Foothill yellow-legged frog).